The chain runs to 467 residues: Acyl-lipid (8-3)-desaturase B (467 aa).

The 78-residue stretch at 12 to 89 folds into the Cytochrome b5 heme-binding domain; sequence LKLYTWDEVS…IKQYEIGYIS (78 aa). Heme contacts are provided by His47 and His70. Helical transmembrane passes span 123 to 143 and 152 to 172; these read VSVG…VTYY and FWLN…FGLH. Residues 175-179 carry the Histidine box-1 motif; sequence HDACH. Residues 187–207 traverse the membrane as a helical segment; the sequence is MTWKILGATFDLFAGASFYAW. The short motif at 211–216 is the Histidine box-2 element; the sequence is HVIGHH. 2 consecutive transmembrane segments (helical) span residues 293–313 and 317–337; these read AIFI…PLIY and FSHL…YLAI. Positions 400–404 match the Histidine box-3 motif; that stretch reads QVIHH.

The protein belongs to the fatty acid desaturase type 1 family. Requires Fe(2+) as cofactor.

It localises to the membrane. It catalyses the reaction an (8Z,11Z,14Z)-icosatrienoyl-containing glycerolipid + 2 Fe(II)-[cytochrome b5] + O2 + 2 H(+) = (5Z,8Z,11Z,14Z)-eicosatetraenoyl-containing glycerolipid + 2 Fe(III)-[cytochrome b5] + 2 H2O. It carries out the reaction an (8Z,11Z,14Z,17Z)-eicosatetraenoyl-containing glycerolipid + 2 Fe(II)-[cytochrome b5] + O2 + 2 H(+) = a (5Z,8Z,11Z,14Z,17Z)-eicosapentaenoyl-containing glycerolipid + 2 Fe(III)-[cytochrome b5] + 2 H2O. Functionally, fatty acid desaturase that introduces a cis double bond at the 5-position in 18-carbon polyunsaturated fatty acids. In Dictyostelium discoideum (Social amoeba), this protein is Acyl-lipid (8-3)-desaturase B (fadB).